The chain runs to 432 residues: Protein distal antenna-related (432 aa).

The HTH psq-type domain maps to Thr15–Leu66. A DNA-binding region (H-T-H motif) is located at residues Lys42–Asn62. 2 disordered regions span residues Glu195–Lys221 and Ser401–Gln432. 2 stretches are compositionally biased toward polar residues: residues Lys202–Thr211 and Ser401–Ala425.

Interacts with itself, dan, ey and dac to form a complex (or complexes) containing the RD factors.

The protein resides in the nucleus. Functionally, probable transcription factor with a role in the retinal determination (RD) network. Regulates ato expression and is required for normal R8 induction and differentiation. Danr appears to repress Dan expression, but Dan is required for Danr expression anterior to the morphogenetic furrow (MF). Dan and Danr lie downstream of so and require dac function for highest levels of expression. Contributes to differentiation of antenna-specific characteristics; effector gene that acts downstream of homothorax (hth), Distal-less (Dll), cut (ct) and spineless (ss) genes to control differentiation of distal antennal structures. The sequence is that of Protein distal antenna-related from Drosophila pseudoobscura pseudoobscura (Fruit fly).